The primary structure comprises 831 residues: Zinc transporter ZIP10 (831 aa).

An N-terminal signal peptide occupies residues 1-25 (MKVHMHTKFCLICLLTFIFHHCNHC). Residues 126–318 (HNHQHSHNHL…RKREAPHVKN (193 aa)) are disordered. Residues 138-147 (ENQTVTSVST) are compositionally biased toward polar residues. N-linked (GlcNAc...) asparagine glycosylation occurs at Asn139. The span at 152–171 (KCDPEKETVEVSVKSDDKHM) shows a compositional bias: basic and acidic residues. The segment covering 172-188 (HDHNHRLRHHHRLHHHL) has biased composition (basic residues). The segment covering 189–198 (DHNNTHHFHN) has biased composition (basic and acidic residues). 2 N-linked (GlcNAc...) asparagine glycosylation sites follow: Asn198 and Asn218. The segment covering 211-221 (NEPSTETNKTQ) has biased composition (polar residues). The span at 229-238 (PKGKRKKKGR) shows a compositional bias: basic residues. 2 stretches are compositionally biased toward basic and acidic residues: residues 256 to 273 (DQGE…DRVH) and 281 to 315 (HLPE…EAPH). Asn339 carries N-linked (GlcNAc...) asparagine glycosylation. 2 consecutive transmembrane segments (helical) span residues 411-431 (IISI…VPII) and 438-458 (FLLT…ALLH). Positions 464 to 484 (QGGHDHSHQHAHGHGHSHGHE) are disordered. The helical transmembrane segment at 495–515 (VLKGLVALGGIYLLFIIEHCI) threads the bilayer. Residues Thr536 and Thr553 each carry the phosphothreonine modification. The residue at position 591 (Ser591) is a Phosphoserine. A run of 4 helical transmembrane segments spans residues 687–707 (AIGA…IAVF), 732–752 (IVYN…GTAV), 759–779 (ITLW…LVDM), and 801–821 (FILQ…IALY).

The protein belongs to the ZIP transporter (TC 2.A.5) family. Interacts with SLC39A6; which triggers cells to undergo EMT and mitosis. Found in a complex with SLC39A6, SLC39A10 and with the 'Ser-727' phosphorylated form of STAT3 throughout mitosis. Found in a complex with SLC39A6, SLC39A10 and with NCAM1; this complex controls NCAM1 phosphorylation and integration into focal adhesion complexes during epithelial-tomesenchymal transition. Found in a complex with SLC39A6, SLC39A10 and with GSK3B that controls NCAM1 phosphorylation. Undergoes N-terminal ectodomain shedding.

The protein resides in the cell membrane. Its subcellular location is the apical cell membrane. It carries out the reaction Zn(2+)(in) = Zn(2+)(out). Its function is as follows. Zinc-influx transporter. When associated with SLC39A6, the heterodimer formed by SLC39A10 and SLC39A6 mediates cellular zinc uptake to trigger cells to undergo epithelial-to-mesenchymal transition (EMT). SLC39A10-SLC39A6 heterodimers play also an essentiel role in initiating mitosis by importing zinc into cells to initiate a pathway resulting in the onset of mitosis. Plays an important for both mature B-cell maintenance and humoral immune responses. When associated with SLC39A10, the heterodimer controls NCAM1 phosphorylation and integration into focal adhesion complexes during EMT. The chain is Zinc transporter ZIP10 from Homo sapiens (Human).